We begin with the raw amino-acid sequence, 392 residues long: Selenide, water dikinase 1 (392 aa).

C31 is an active-site residue. ATP is bound by residues K32, 67–69, D87, D110, and 161–164; these read GMD and GGQT. D69 is a binding site for Mg(2+). Residue D110 participates in Mg(2+) binding. D265 is a Mg(2+) binding site. Residue T387 is modified to Phosphothreonine.

The protein belongs to the selenophosphate synthase 1 family. Class II subfamily. In terms of assembly, homodimer. Mg(2+) serves as cofactor.

It localises to the cell membrane. The protein resides in the nucleus membrane. It catalyses the reaction hydrogenselenide + ATP + H2O = selenophosphate + AMP + phosphate + 2 H(+). Its function is as follows. Synthesizes selenophosphate from selenide and ATP. The protein is Selenide, water dikinase 1 (sephs1) of Danio rerio (Zebrafish).